Here is a 363-residue protein sequence, read N- to C-terminus: NADH-quinone oxidoreductase subunit H (363 aa).

Helical transmembrane passes span 29–49 (VLKILLIAVPVIVSVAFYVVW), 62–82 (GPMYVGMGIFQAFADVFKLLF), 96–116 (FIIAPLLTLAPAFAAWSVVPF), 127–147 (VGLLYLLAMTSLGVYGIILAG), 163–183 (AAQVVSYEIAMGFALVGVMIA), 202–222 (FFDWFLIPLFPLFIVYWVSGV), 238–257 (EIVAGHMVEYSGGAFALFFL), 264–286 (ILVSFLISIFFLGGWLSPIQGWV), 299–319 (KGGWPWLLMKVFFFASAYIWF), and 339–359 (FIPLTIVWIAVTALMVFYGVI).

This sequence belongs to the complex I subunit 1 family. As to quaternary structure, NDH-1 is composed of 14 different subunits. Subunits NuoA, H, J, K, L, M, N constitute the membrane sector of the complex.

The protein resides in the cell inner membrane. It catalyses the reaction a quinone + NADH + 5 H(+)(in) = a quinol + NAD(+) + 4 H(+)(out). NDH-1 shuttles electrons from NADH, via FMN and iron-sulfur (Fe-S) centers, to quinones in the respiratory chain. The immediate electron acceptor for the enzyme in this species is believed to be ubiquinone. Couples the redox reaction to proton translocation (for every two electrons transferred, four hydrogen ions are translocated across the cytoplasmic membrane), and thus conserves the redox energy in a proton gradient. This subunit may bind ubiquinone. The polypeptide is NADH-quinone oxidoreductase subunit H (Xanthomonas oryzae pv. oryzae (strain PXO99A)).